Consider the following 361-residue polypeptide: Molybdopterin synthase catalytic subunit (361 aa).

Residues 101–102 (HR), Lys117, and 124–126 (KKE) contribute to the substrate site.

It belongs to the MoaE family. MOCS2B subfamily. In terms of assembly, heterotetramer; composed of 2 small (Mocs2A) and 2 large (Mocs2B) subunits.

The protein localises to the cytoplasm. It carries out the reaction 2 [molybdopterin-synthase sulfur-carrier protein]-C-terminal-Gly-aminoethanethioate + cyclic pyranopterin phosphate + H2O = molybdopterin + 2 [molybdopterin-synthase sulfur-carrier protein]-C-terminal Gly-Gly + 2 H(+). Its pathway is cofactor biosynthesis; molybdopterin biosynthesis. Its function is as follows. Catalytic subunit of the molybdopterin synthase complex, a complex that catalyzes the conversion of precursor Z into molybdopterin. Acts by mediating the incorporation of 2 sulfur atoms from thiocarboxylated Mocs2A into precursor Z to generate a dithiolene group. The sequence is that of Molybdopterin synthase catalytic subunit from Drosophila pseudoobscura pseudoobscura (Fruit fly).